The primary structure comprises 586 residues: MVRSVFALVFAAVLLGGCASVPSSSAPQAIGTVERPAPSNLPKPIPGMDPDVLLREFLKATADPANRHLAARQFLTQSASNAWDDAGSALLIDHVVFVETRGAERVSATMRADILGSLSDMGVFETAEGELPDPGPIELVKTSGGWRIDRLPNGVFLDWQQFQSTYKRNTLYFADPTGKTVVPDPRYVAVSDHDQLATELVSKLLAGPRPEMAHSVRNLLAPPLRLRGPVTRADGGKSGIGKGYGGARIDLEKLSTTDSHSRQLLAAQIIWTLARADIRGPYVINADGAPLDDRFAEGWTTSDVAATDPGVADGAGAGLHALVGGSLVALDGQRITTVEGAFGRMGDQTGAALSRTGRLVASVVTLRRGAPDVAASLWIGELGAEAVQAADGHNLSRPSWSLDDAVWVVVDTNNVLRAIQEPASGQPARIPVDSTAVSSRFPGAITDLQLSRDGTRAAMVIDGRVILSSVEQTQAGQFALTYPRRLGFGLGTSVVSLSWRTGDDIVVTRNDVGHPVSYVNLDGVNSDAPARGLQIPLFAIAANPSTVYVAGPQGVMMYSASSAEGQQSWAEVPGLMVTGAAPVLPG.

Positions 1-17 are cleaved as a signal peptide; it reads MVRSVFALVFAAVLLGG. Residue cysteine 18 is the site of N-palmitoyl cysteine attachment. Cysteine 18 carries the S-diacylglycerol cysteine lipid modification. Residues 26–45 form a disordered region; the sequence is APQAIGTVERPAPSNLPKPI.

The protein belongs to the LpqB lipoprotein family.

It localises to the cell membrane. This Mycobacterium ulcerans (strain Agy99) protein is Lipoprotein LpqB.